Reading from the N-terminus, the 338-residue chain is Glyceraldehyde-3-phosphate dehydrogenase (338 aa).

Residues 12–13 (RI), Asp34, and Arg79 contribute to the NAD(+) site. Residues 150-152 (SCT), Thr181, 210-211 (TG), and Arg233 each bind D-glyceraldehyde 3-phosphate. Catalysis depends on Cys151, which acts as the Nucleophile. Residue Asn316 coordinates NAD(+).

Belongs to the glyceraldehyde-3-phosphate dehydrogenase family. As to quaternary structure, homotetramer.

The protein localises to the cytoplasm. The catalysed reaction is D-glyceraldehyde 3-phosphate + phosphate + NAD(+) = (2R)-3-phospho-glyceroyl phosphate + NADH + H(+). Its pathway is carbohydrate degradation; glycolysis; pyruvate from D-glyceraldehyde 3-phosphate: step 1/5. The polypeptide is Glyceraldehyde-3-phosphate dehydrogenase (GPD) (Yarrowia lipolytica (strain CLIB 122 / E 150) (Yeast)).